The chain runs to 225 residues: Transmembrane protein 225 (225 aa).

The Cytoplasmic segment spans residues 1 to 8 (MVHVSNRS). The chain crosses the membrane as a helical span at residues 9–29 (IQGMNILFSSWAVVLMVMGIT). Topologically, residues 30–72 (LDKWVELISEDERAKMNHSPWMMCCPALWPEDDLKVVRIMMTS) are extracellular. Residues 73–93 (SLGLSFLLNLILGMKFTYLIP) traverse the membrane as a helical segment. Over 94–99 (QNKYIQ) the chain is Cytoplasmic. The helical transmembrane segment at 100–120 (LFTTILSFFSGISLLWALILY) threads the bilayer. The Extracellular segment spans residues 121-136 (HNKLKQGQSMHFSSYR). A helical transmembrane segment spans residues 137-157 (ITWIMYTAYLNVFFLSVCGVL). Over 158-225 (SLLECKLSTS…VQTRHVTWAL (68 aa)) the chain is Cytoplasmic. Positions 219 to 223 (RHVTW) match the RVxF motif.

In terms of assembly, interacts (via RVxF motif) with PPP1CC.

Its subcellular location is the cytoplasmic vesicle. It localises to the secretory vesicle. The protein localises to the acrosome membrane. Functionally, probably inhibits protein phosphatase 1 (PP1) in sperm via binding to catalytic subunit PPP1CC. This Homo sapiens (Human) protein is Transmembrane protein 225 (TMEM225).